We begin with the raw amino-acid sequence, 433 residues long: Cell adhesion molecule 2 (433 aa).

An N-terminal signal peptide occupies residues 1-24 (MILQPSALLCLSSLWGVIVQASQG). Residues 25-365 (QFPVTQNVTV…ALPGPVATDH (341 aa)) are Extracellular-facing. In terms of domain architecture, Ig-like V-type spans 27 to 114 (PVTQNVTVVE…SLFTMPVKTS (88 aa)). Asn31, Asn41, and Asn51 each carry an N-linked (GlcNAc...) asparagine glycan. 3 disulfides stabilise this stretch: Cys44–Cys104, Cys146–Cys203, and Cys248–Cys296. Ig-like C2-type domains follow at residues 127–217 (PHIS…PQIA) and 227–312 (PTVR…YVLI). Asn287 and Asn291 each carry an N-linked (GlcNAc...) asparagine glycan. Residues 366 to 386 (ALIGGVVAVVVFVTLCSIILI) traverse the membrane as a helical segment. The Cytoplasmic segment spans residues 387–433 (GRYLARHKGTYLTNEAKGAEDAPDADTAIINAEGSQVNAEEKKEYFI).

It belongs to the nectin family.

It localises to the membrane. The sequence is that of Cell adhesion molecule 2 (cadm2) from Xenopus tropicalis (Western clawed frog).